The sequence spans 298 residues: Bifunctional protein FolD (298 aa).

Residues 165–167 (GRS), serine 190, and isoleucine 231 each bind NADP(+).

The protein belongs to the tetrahydrofolate dehydrogenase/cyclohydrolase family. Homodimer.

The catalysed reaction is (6R)-5,10-methylene-5,6,7,8-tetrahydrofolate + NADP(+) = (6R)-5,10-methenyltetrahydrofolate + NADPH. The enzyme catalyses (6R)-5,10-methenyltetrahydrofolate + H2O = (6R)-10-formyltetrahydrofolate + H(+). It functions in the pathway one-carbon metabolism; tetrahydrofolate interconversion. Catalyzes the oxidation of 5,10-methylenetetrahydrofolate to 5,10-methenyltetrahydrofolate and then the hydrolysis of 5,10-methenyltetrahydrofolate to 10-formyltetrahydrofolate. This is Bifunctional protein FolD from Prochlorococcus marinus (strain MIT 9312).